A 96-amino-acid chain; its full sequence is UPF0235 protein Ent638_3359 (96 aa).

This sequence belongs to the UPF0235 family.

The polypeptide is UPF0235 protein Ent638_3359 (Enterobacter sp. (strain 638)).